The chain runs to 166 residues: Ribosome-binding factor A (166 aa).

A disordered region spans residues 122–166 (LASTAEHAGDADPYRVDTEDDDDDTDGADAEARSDADVRRGPQSG). The segment covering 128 to 138 (HAGDADPYRVD) has biased composition (basic and acidic residues). Acidic residues predominate over residues 139 to 150 (TEDDDDDTDGAD). A compositionally biased stretch (basic and acidic residues) spans 151-166 (AEARSDADVRRGPQSG).

The protein belongs to the RbfA family. In terms of assembly, monomer. Binds 30S ribosomal subunits, but not 50S ribosomal subunits or 70S ribosomes.

Its subcellular location is the cytoplasm. One of several proteins that assist in the late maturation steps of the functional core of the 30S ribosomal subunit. Associates with free 30S ribosomal subunits (but not with 30S subunits that are part of 70S ribosomes or polysomes). Required for efficient processing of 16S rRNA. May interact with the 5'-terminal helix region of 16S rRNA. The chain is Ribosome-binding factor A from Saccharopolyspora erythraea (strain ATCC 11635 / DSM 40517 / JCM 4748 / NBRC 13426 / NCIMB 8594 / NRRL 2338).